A 246-amino-acid chain; its full sequence is Short chain dehydrogenase/reductase dmxR12 (246 aa).

The NADP(+) site is built by isoleucine 15, serine 34, lysine 125, and lysine 164. The Lowers pKa of active site Tyr role is filled by lysine 164.

Belongs to the short-chain dehydrogenases/reductases (SDR) family.

It participates in secondary metabolite biosynthesis. Functionally, short chain dehydrogenase/reductase; part of the gene cluster that mediates the biosynthesis of the dimeric xanthones cryptosporioptides. The pathway begins with the synthesis of atrochrysone thioester by the polyketide synthase dmx-nrPKS. The atrochrysone carboxyl ACP thioesterase dmxR1 then breaks the thioester bond and releases the atrochrysone carboxylic acid from dmx-nrPKS. Atrochrysone carboxylic acid is decarboxylated by the decarboxylase dmxR15, and oxidized by the anthrone oxygenase dmxR16 to yield emodin. Emodin is then reduced to emodin hydroquinone by the oxidoreductase dmxR7. A-ring reduction by the short chain dehydrogenase dmxR18, dehydration by the scytalone dehydratase-like protein dmxR17 and probable spontaneous re-oxidation, results in overall deoxygenation to chrysophanol. Baeyer-Villiger oxidation by the Baeyer-Villiger monooxygenase (BVMO) dmxR6 then yields monodictylactone in equilibrium with monodictyphenone. In the case of the cryptosporioptides biosynthesis, monodictylactone is reduced at C-12 to an alcohol (by the short chain dehydrogenases dmxR12 or dmxR8) and hydroxylated at C-5 by dmxR9, yielding the electron-rich aromatic which could eliminate H(2)O to form the ortho-quinonemethide, followed by tautomerisation to paraquinone and complete the formal reduction to produce the 10-methylgroup. Conjugate addition of C-4a-OH to the resulting paraquinone by the monooxygenase dmxR10 then gives cyclohexadienone, which is then reduced at C-5 by the short chain dehydrogenase dmxR3 to give the dihydroxanthone. The 6,7-epoxide in the cryptosporioptides could be introduced by the cytochrome P450 monooxygenase dmxL3. The highly reducing PKS dmxL2 manufactures butyrate, which is further carboxylated by dmxL1 to form ethylmalonate. It is not yet clear whether the carboxylation occurs while the butyrate is attached to the ACP of dmxL2, but this unusual fungal metabolite could then be esterified to O-5 by the O-acetyltransferase dmxR13. Finally, dimerization performed by dmxR5 gives the observed dimers cryptosporioptides A, B and C as the final products of the pathway. The sequence is that of Short chain dehydrogenase/reductase dmxR12 from Cryptosporiopsis sp. (strain 8999).